A 301-amino-acid chain; its full sequence is Probable alpha-L-glutamate ligase (301 aa).

Residues 104-287 (LQLLSRRGIG…VAGIIIEHLE (184 aa)) enclose the ATP-grasp domain. Residues Lys141, 178-179 (EY), Asp187, and 211-213 (RSN) each bind ATP. Asp248, Glu260, and Asn262 together coordinate Mg(2+). Asp248, Glu260, and Asn262 together coordinate Mn(2+).

This sequence belongs to the RimK family. The cofactor is Mg(2+). Mn(2+) is required as a cofactor.

The polypeptide is Probable alpha-L-glutamate ligase (Pseudomonas fluorescens (strain SBW25)).